The primary structure comprises 387 residues: Patatin group D-3 (387 aa).

The N-terminal stretch at 1-23 is a signal peptide; it reads MATTKSFLILIVMILATTSSTFA. The PNPLA domain maps to 32 to 230; it reads LSIDGGGIKG…TVADPALLSI (199 aa). Residues 36-41 carry the GXGXXG motif; that stretch reads GGGIKG. A GXSXG motif is present at residues 75–79; that stretch reads GTSTG. S77 acts as the Nucleophile in catalysis. N115 carries an N-linked (GlcNAc...) asparagine glycan. Catalysis depends on D216, which acts as the Proton acceptor. A DGA/G motif is present at residues 216 to 218; it reads DGA. The stretch at 361 to 385 forms a coiled coil; that stretch reads ETYEEALKRFAKLLSDRKKLRANKA.

Belongs to the patatin family. In terms of tissue distribution, tuber.

It is found in the vacuole. In terms of biological role, probable lipolytic acyl hydrolase (LAH), an activity which is thought to be involved in the response of tubers to pathogens. In Solanum tuberosum (Potato), this protein is Patatin group D-3.